The primary structure comprises 122 residues: Small ribosomal subunit protein uS13 (122 aa).

The interval 98 to 122 is disordered; it reads VRGQRTHTNARTRKGPAKAIAGKKK.

This sequence belongs to the universal ribosomal protein uS13 family. As to quaternary structure, part of the 30S ribosomal subunit. Forms a loose heterodimer with protein S19. Forms two bridges to the 50S subunit in the 70S ribosome.

In terms of biological role, located at the top of the head of the 30S subunit, it contacts several helices of the 16S rRNA. In the 70S ribosome it contacts the 23S rRNA (bridge B1a) and protein L5 of the 50S subunit (bridge B1b), connecting the 2 subunits; these bridges are implicated in subunit movement. Contacts the tRNAs in the A and P-sites. The chain is Small ribosomal subunit protein uS13 from Ruegeria pomeroyi (strain ATCC 700808 / DSM 15171 / DSS-3) (Silicibacter pomeroyi).